Reading from the N-terminus, the 681-residue chain is Sodium/glucose cotransporter 4 (681 aa).

The Extracellular portion of the chain corresponds to 1–36 (MSKELAAMGPGASGDGVRTETAPHIALDSRVGLHAY). Residues 37–57 (DISVVVIYFVFVIAVGIWSSI) traverse the membrane as a helical segment. The Cytoplasmic portion of the chain corresponds to 58 to 75 (RASRGTIGGYFLAGRSMS). A helical transmembrane segment spans residues 76–98 (WWPIGASLMSSNVGSGLFIGLAG). At 99 to 114 (TGAAGGLAVGGFEWNA) the chain is on the extracellular side. Residues 115 to 135 (TWLLLALGWVFVPVYIAAGVV) traverse the membrane as a helical segment. Residues 136–157 (TMPQYLKKRFGGQRIQVYMSVL) are Cytoplasmic-facing. A helical membrane pass occupies residues 158–178 (SLILYIFTKISTDIFSGALFI). Over 179 to 190 (QMALGWNLYLST) the chain is Extracellular. The helical transmembrane segment at 191–211 (GILLVVTAVYTIAGGLMAVIY) threads the bilayer. Residues 212–217 (TDALQT) lie on the Cytoplasmic side of the membrane. Residues 218–238 (VIMVGGALVLMFLGFQDVGWY) form a helical membrane-spanning segment. Residues 239 to 275 (PGLEQRYRQAIPNVTVPNTTCHLPRPDAFHILRDPVS) are Extracellular-facing. N-linked (GlcNAc...) asparagine glycosylation is present at N251. Residues 276 to 296 (GDIPWPGLIFGLTVLATWCWC) traverse the membrane as a helical segment. Topologically, residues 297-317 (TDQVIVQRSLSAKSLSHAKGG) are cytoplasmic. Residues 318–338 (SVLGGYLKILPMFFIVMPGMI) traverse the membrane as a helical segment. Topologically, residues 339 to 383 (SRALFPDEVGCVDPDVCQRICGARVGCSNIAYPKLVMALMPVGLR) are extracellular. The helical transmembrane segment at 384 to 406 (GLMIAVIMAALMSSLTSIFNSSS) threads the bilayer. Residues 407 to 427 (TLFTIDVWQRFRRKSTEQELM) lie on the Cytoplasmic side of the membrane. The helical transmembrane segment at 428 to 448 (VVGRVFVVFLVVISILWIPII) threads the bilayer. Residues 449-459 (QSSNSGQLFDY) are Extracellular-facing. Residues 460 to 480 (IQAVTSYLAPPITALFLLAIF) form a helical membrane-spanning segment. Topologically, residues 481-487 (CKRVTEP) are cytoplasmic. Residues 488–508 (GAFWGLVFGLGVGLLRMILEF) form a helical membrane-spanning segment. Topologically, residues 509-530 (SYPAPACGEVDRRPAVLKDFHY) are extracellular. The chain crosses the membrane as a helical span at residues 531–551 (LYFAILLCGLTAIVIVIVSLC). Topologically, residues 552–660 (TTPIPEEQLT…SIEEEPLWRH (109 aa)) are cytoplasmic. Basic and acidic residues predominate over residues 579–591 (AHESTPEISERPA). The tract at residues 579–614 (AHESTPEISERPAGECPAGGGAAENSSLGQEQPEAP) is disordered. Phosphoserine is present on residues S604 and S605. A helical membrane pass occupies residues 661–681 (VCNINAVLLLAINIFLWGYFA).

It belongs to the sodium:solute symporter (SSF) (TC 2.A.21) family. In terms of tissue distribution, expressed in the small intestine, kidney and liver.

Its subcellular location is the cell membrane. The catalysed reaction is D-mannose(out) + n Na(+)(out) = D-mannose(in) + n Na(+)(in). Electrogenic Na(+)-coupled sugar symporter that may play a primary role in D-mannose and possibly D-fructose and D-glucose transport at the plasma membrane. Transporter activity is driven by a transmembrane Na(+) electrochemical gradient set by the Na(+)/K(+) pump. Exclusively recognizes sugar substrates having a pyranose ring with an axial hydroxyl group on carbon 2. The protein is Sodium/glucose cotransporter 4 of Homo sapiens (Human).